Here is a 286-residue protein sequence, read N- to C-terminus: Structure-specific endonuclease subunit SLX1 (286 aa).

The 84-residue stretch at 15-98 (SFYGVYILKS…QHAYQTRHIN (84 aa)) folds into the GIY-YIG domain.

This sequence belongs to the SLX1 family. Forms a heterodimer with SLX4. The cofactor is a divalent metal cation.

It is found in the nucleus. Functionally, catalytic subunit of the SLX1-SLX4 structure-specific endonuclease that resolves DNA secondary structures generated during DNA repair and recombination. Has endonuclease activity towards branched DNA substrates, introducing single-strand cuts in duplex DNA close to junctions with ss-DNA. The polypeptide is Structure-specific endonuclease subunit SLX1 (Candida dubliniensis (strain CD36 / ATCC MYA-646 / CBS 7987 / NCPF 3949 / NRRL Y-17841) (Yeast)).